Here is a 215-residue protein sequence, read N- to C-terminus: FGFR1 oncogene partner 2 homolog (215 aa).

A coiled-coil region spans residues 35–183 (LLNKRVEAMK…SGLRELLGIS (149 aa)).

The protein belongs to the SIKE family.

The protein localises to the cytoplasm. The protein is FGFR1 oncogene partner 2 homolog (fgfr1op2) of Danio rerio (Zebrafish).